The following is a 154-amino-acid chain: 3-hydroxyacyl-[acyl-carrier-protein] dehydratase FabZ (154 aa).

His-57 is an active-site residue.

The protein belongs to the thioester dehydratase family. FabZ subfamily.

It localises to the cytoplasm. It catalyses the reaction a (3R)-hydroxyacyl-[ACP] = a (2E)-enoyl-[ACP] + H2O. In terms of biological role, involved in unsaturated fatty acids biosynthesis. Catalyzes the dehydration of short chain beta-hydroxyacyl-ACPs and long chain saturated and unsaturated beta-hydroxyacyl-ACPs. The sequence is that of 3-hydroxyacyl-[acyl-carrier-protein] dehydratase FabZ from Sinorhizobium fredii (strain NBRC 101917 / NGR234).